The following is a 444-amino-acid chain: RING finger and transmembrane domain-containing protein 2 (444 aa).

The Extracellular segment spans residues M1 to H181. Disordered stretches follow at residues M13 to D41 and P92 to P149. Positions Y107 to H121 are enriched in basic residues. Positions G131–E140 are enriched in basic and acidic residues. Residues K182–L202 form a helical membrane-spanning segment. Residues R203–V214 lie on the Cytoplasmic side of the membrane. Residues L215–F235 traverse the membrane as a helical segment. Residues S236–D255 are Extracellular-facing. The chain crosses the membrane as a helical span at residues F256–A276. The Cytoplasmic segment spans residues L277–S329. A helical membrane pass occupies residues Y330–G350. Residues R351–Y444 lie on the Extracellular side of the membrane. The RING-type; degenerate zinc-finger motif lies at C384 to R422.

The protein localises to the membrane. E3 ubiquitin-protein ligase that negatively regulates IL3-dependent cellular responses through IL3RA ubiquitination and degradation by the proteasome, having an anti-inflammatory effect. The polypeptide is RING finger and transmembrane domain-containing protein 2 (RNFT2) (Pongo abelii (Sumatran orangutan)).